The chain runs to 323 residues: uncharacterized protein (323 aa).

The signal sequence occupies residues 1 to 45 (MLATLSQIRAWSTEHLIDAAGYWTETADRWEDVFLQMRNQAHAIA). The tract at residues 186 to 227 (FKQDGPTPPPPGAPHPSGGADGPYSDPITSMMLPPAGTEAPV) is disordered. 2 helical membrane passes run 269-289 (SAEWTAAVAGFAGSSAGVVGT) and 290-310 (ALAIPAGPADWALLGAALLGV).

The protein resides in the cell membrane. This is an uncharacterized protein from Mycobacterium tuberculosis (strain CDC 1551 / Oshkosh).